A 617-amino-acid chain; its full sequence is Hemagglutinin glycoprotein (617 aa).

The Intravirion portion of the chain corresponds to methionine 1–valine 37. The tract at residues methionine 1 to cysteine 154 is stalk. A helical; Signal-anchor for type II membrane protein transmembrane segment spans residues leucine 38–isoleucine 58. Topologically, residues arginine 59 to arginine 617 are virion surface. 5 N-linked (GlcNAc...) asparagine; by host glycosylation sites follow: asparagine 168, asparagine 187, asparagine 200, asparagine 215, and asparagine 238. 5 cysteine pairs are disulfide-bonded: cysteine 188–cysteine 606, cysteine 287–cysteine 300, cysteine 381–cysteine 494, cysteine 386–cysteine 394, and cysteine 570–cysteine 579. The segment at proline 458 to tyrosine 543 is interaction with host NECTIN4 receptor.

The protein belongs to the paramyxoviruses hemagglutinin-neuraminidase family. Non-sialidase subfamily. In terms of assembly, homodimer; disulfide-linked. Further forms homotetramer (dimer of dimers). Interacts (via C-terminus) with human NECTIN4 (via N-terminus); this interaction allows attachment to the respiratory epithelium and viral entry. Interacts (via C-terminus) with human SLAMF1/CD150 (via N-terminus); this interaction allows attachment and viral entry into the CD150-expressing immune cells. Interacts with human CD46 antigen (via N-terminus); this interaction allows attachment and viral entry of vaccine and laboratory-adapted strains.

The protein resides in the virion membrane. It localises to the host cell membrane. Its function is as follows. Attaches the virus to the human SLAMF1/CD150 receptor for entry into host dendritic cells, macrophages, activated memory T cells and naive or memory B cells, thereby explaining the long immunosuppression that follows infection. In the respiratory airways, binds to the NECTIN4 receptor for entry into the host cell. Binding of H protein to the receptor induces a conformational change that allows the F protein to trigger virion/cell membranes fusion. The vaccine and laboratory-adapted strains use host CD46 as an alternate receptor. The high degree of interaction between H and CD46 results in down-regulation of the latter from the surface of infected cells, rendering them more sensitive to c3b-mediated complement lysis. In Measles virus (strain Edmonston) (MeV), this protein is Hemagglutinin glycoprotein (H).